The sequence spans 219 residues: Multiple organellar RNA editing factor 2, chloroplastic (219 aa).

The N-terminal 48 residues, 1–48, are a transit peptide targeting the chloroplast; it reads MALPLSGTRHLTRALLSNVTLMAPPRIPSSVHYGGSRLGCSTRFFSIR. The disordered stretch occupies residues 182–219; sequence VQRSPERQRRVEPQPQRAQDRPRYNDRTRYSRRRENTR. Basic and acidic residues predominate over residues 185-219; that stretch reads SPERQRRVEPQPQRAQDRPRYNDRTRYSRRRENTR.

Belongs to the MORF family. Homodimer and heterodimer with MORF9. Interacts with protoporphyrinogen oxidase 1 PPOX1. Heterodimers with MORF8/RIP1 and MORF9/RIP9. Interacts with PCMP-A2/PMD1. Interacts with ORRM1. Interacts with ORRM6.

It localises to the plastid. The protein localises to the chloroplast. In terms of biological role, involved in plastid rRNA processing and consequently in translation and early chloroplast differentiation. Involved in organellar RNA editing. Required for the processing of multiple editing sites in plastids. The chain is Multiple organellar RNA editing factor 2, chloroplastic from Arabidopsis thaliana (Mouse-ear cress).